A 224-amino-acid polypeptide reads, in one-letter code: 7-cyano-7-deazaguanine synthase (224 aa).

Ile9 to Ala19 serves as a coordination point for ATP. Zn(2+) is bound by residues Cys190, Cys198, Cys201, and Cys204.

It belongs to the QueC family. Requires Zn(2+) as cofactor.

The catalysed reaction is 7-carboxy-7-deazaguanine + NH4(+) + ATP = 7-cyano-7-deazaguanine + ADP + phosphate + H2O + H(+). It functions in the pathway purine metabolism; 7-cyano-7-deazaguanine biosynthesis. Functionally, catalyzes the ATP-dependent conversion of 7-carboxy-7-deazaguanine (CDG) to 7-cyano-7-deazaguanine (preQ(0)). The sequence is that of 7-cyano-7-deazaguanine synthase from Campylobacter jejuni subsp. jejuni serotype O:6 (strain 81116 / NCTC 11828).